We begin with the raw amino-acid sequence, 260 residues long: Glutamate racemase (260 aa).

Substrate is bound by residues 14-15 and 46-47; these read DS and YG. The active-site Proton donor/acceptor is Cys77. Position 78–79 (78–79) interacts with substrate; it reads NT. Catalysis depends on Cys188, which acts as the Proton donor/acceptor. Residue 189-190 coordinates substrate; the sequence is TH.

The protein belongs to the aspartate/glutamate racemases family.

It carries out the reaction L-glutamate = D-glutamate. Its pathway is cell wall biogenesis; peptidoglycan biosynthesis. In terms of biological role, provides the (R)-glutamate required for cell wall biosynthesis. This Clostridium perfringens (strain SM101 / Type A) protein is Glutamate racemase.